The chain runs to 404 residues: GID complex subunit 9 (404 aa).

A LisH domain is found at 116–148; it reads SRVRLNRLVADYMMANGYHGAAALLCKDSQLEN. In terms of domain architecture, CTLH spans 154-211; that stretch reads IYKRYQLIHDSILQQELKEVLSWCSEHRAILKKNNSTLELEVRLQRFIELIKSKKLCQ. An RING-Gid-type zinc finger spans residues 317 to 389; it reads CPVCTPCLND…REGFLRDPYS (73 aa).

The protein belongs to the FYV10 family. In terms of assembly, identified in the GID/CTLH complex. In the absence of stress, the complex exists as an inactive anticipatory complex (GID(Ant)), composed of Gid1, the E3 ubiquitin-ligase Gid2, Gid5, Gid8, and the RING-like subunit Gid9, awaiting a substrate receptor to form the active E3 ligase complex. When cells are shifted to glucose-containing medium, the substrate receptor Gid4 is induced and becomes part of the complex, named GID(SR4). Additionally, Gid7 transforms the GID(SR4) E3 ligase core into a higher-order supramolecular assembly (Chelator-GID(SR4)). Under osmotic or heat stress, the substrate receptor Gid10 is induced and becomes part of the complex, named GID(SR10).

Its subcellular location is the cytoplasm. The protein resides in the nucleus. It carries out the reaction S-ubiquitinyl-[E2 ubiquitin-conjugating enzyme]-L-cysteine + [acceptor protein]-L-lysine = [E2 ubiquitin-conjugating enzyme]-L-cysteine + N(6)-ubiquitinyl-[acceptor protein]-L-lysine.. Its pathway is protein modification; protein ubiquitination. In terms of biological role, component of the GID E3 ligase complex recruiting N termini and catalyzing ubiquitination of proteins targeted for degradation. GID E3 is regulated through assembly with interchangeable N-degron-binding substrate receptors induced by distinct environmental perturbations. Required for the adaptation to the presence of glucose in the growth medium; mediates in association with the substrate receptor VID24/GID4 the degradation of enzymes involved in gluconeogenesis when cells are shifted to glucose-containing medium. This chain is GID complex subunit 9 (gid9), found in Schizosaccharomyces pombe (strain 972 / ATCC 24843) (Fission yeast).